Consider the following 227-residue polypeptide: Orotate phosphoribosyltransferase (227 aa).

Residue K34 coordinates 5-phospho-alpha-D-ribose 1-diphosphate. Residue F42–F43 coordinates orotate. 5-phospho-alpha-D-ribose 1-diphosphate is bound by residues Y80–K81, R106, K107, K110, H112, and D131–S139. The orotate site is built by S135 and R163.

The protein belongs to the purine/pyrimidine phosphoribosyltransferase family. PyrE subfamily. Homodimer. Mg(2+) is required as a cofactor.

It catalyses the reaction orotidine 5'-phosphate + diphosphate = orotate + 5-phospho-alpha-D-ribose 1-diphosphate. Its pathway is pyrimidine metabolism; UMP biosynthesis via de novo pathway; UMP from orotate: step 1/2. In terms of biological role, catalyzes the transfer of a ribosyl phosphate group from 5-phosphoribose 1-diphosphate to orotate, leading to the formation of orotidine monophosphate (OMP). The polypeptide is Orotate phosphoribosyltransferase (Cupriavidus necator (strain ATCC 17699 / DSM 428 / KCTC 22496 / NCIMB 10442 / H16 / Stanier 337) (Ralstonia eutropha)).